The sequence spans 500 residues: Dipeptide and tripeptide permease A (500 aa).

The Cytoplasmic portion of the chain corresponds to 1-21; sequence MSTANQKPTESVSLNAFKQPK. The chain crosses the membrane as a helical span at residues 22-44; the sequence is AFYLIFSIELWERFGYYGLQGIM. The Periplasmic portion of the chain corresponds to 45 to 59; the sequence is AVYLVKQLGMSEADS. Residues 60–80 form a helical membrane-spanning segment; that stretch reads ITLFSSFSALVYGLVAIGGWL. Residues 81 to 89 are Cytoplasmic-facing; that stretch reads GDKVLGTKR. A helical transmembrane segment spans residues 90 to 110; the sequence is VIMLGAIVLAIGYALVAWSGH. Residue Asp111 is a topological domain, periplasmic. The helical transmembrane segment at 112 to 132 threads the bilayer; it reads AGIVYMGMAAIAVGNGLFKAN. The Cytoplasmic portion of the chain corresponds to 133–153; sequence PSSLLSTCYEKNDPRLDGAFT. Residues 154–174 form a helical membrane-spanning segment; it reads MYYMSVNIGSFFSMIATPWLA. At 175 to 178 the chain is on the periplasmic side; sequence AKYG. Residues 179–199 traverse the membrane as a helical segment; that stretch reads WSVAFALSVVGLLITIVNFAF. Residues 200–219 are Cytoplasmic-facing; that stretch reads CQRWVKQYGSKPDFEPINYR. A helical membrane pass occupies residues 220–240; the sequence is NLLLTIIGVVALIAIATWLLH. The Periplasmic segment spans residues 241–246; it reads NQEVAR. A helical membrane pass occupies residues 247 to 267; it reads MALGVVAFGIVVIFGKEAFAM. Residues 268–274 lie on the Cytoplasmic side of the membrane; that stretch reads KGAARRK. The chain crosses the membrane as a helical span at residues 275–295; the sequence is MIVAFILMLEAIIFFVLYSQM. At 296 to 320 the chain is on the periplasmic side; sequence PTSLNFFAIRNVEHSILGLAVEPEQ. A helical membrane pass occupies residues 321–341; sequence YQALNPFWIIIGSPILAAIYN. Residues 342–352 lie on the Cytoplasmic side of the membrane; that stretch reads KMGDTLPMPTK. The helical transmembrane segment at 353-373 threads the bilayer; sequence FAIGMVMCSGAFLILPLGAKF. The Periplasmic segment spans residues 374–378; sequence ASDAG. The chain crosses the membrane as a helical span at residues 379–399; sequence IVSVSWLVASYGLQSIGELMI. Residues 400 to 414 lie on the Cytoplasmic side of the membrane; it reads SGLGLAMVAQLVPQR. Residues 415–435 form a helical membrane-spanning segment; that stretch reads LMGFIMGSWFLTTAGANLIGG. Residues 436-459 are Periplasmic-facing; sequence YVAGMMAVPDNVTDPLMSLEVYGR. A helical transmembrane segment spans residues 460 to 480; it reads VFLQIGVATAVIAVLMLLTAP. At 481-500 the chain is on the cytoplasmic side; the sequence is KLHRMTQDDAADKAAKAAVA.

Belongs to the major facilitator superfamily. Proton-dependent oligopeptide transporter (POT/PTR) (TC 2.A.17) family. DtpA subfamily. As to quaternary structure, monomer. Has a crown-like structure with a diameter of 8 nm and a central density.

It is found in the cell inner membrane. Proton-dependent permease that transports di- and tripeptides as well as structurally related peptidomimetics such as aminocephalosporins into the cell. Has a clear preference for dipeptides and tripeptides composed of L-amino acids, and discriminates dipeptides on the basis of the position of charges within the substrate. The polypeptide is Dipeptide and tripeptide permease A (dtpA) (Escherichia coli (strain K12)).